Reading from the N-terminus, the 250-residue chain is ATP synthase subunit a (250 aa).

5 helical membrane passes run 27 to 47 (TDTVLSTAIAALIVLALAFYL), 83 to 103 (IAPFVLPLAVTIFVFILISNW), 129 to 149 (INYVLALALFVFVCYHAAGIW), 191 to 211 (IFAGSILVALIALFPPYIMWA), and 219 to 239 (FDLFVGAIQAFIFALLTILYF).

The protein belongs to the ATPase A chain family. As to quaternary structure, F-type ATPases have 2 components, CF(1) - the catalytic core - and CF(0) - the membrane proton channel. CF(1) has five subunits: alpha(3), beta(3), gamma(1), delta(1), epsilon(1). CF(0) has three main subunits: a(1), b(2) and c(9-12). The alpha and beta chains form an alternating ring which encloses part of the gamma chain. CF(1) is attached to CF(0) by a central stalk formed by the gamma and epsilon chains, while a peripheral stalk is formed by the delta and b chains.

The protein localises to the cell membrane. In terms of biological role, key component of the proton channel; it plays a direct role in the translocation of protons across the membrane. In Mycobacterium ulcerans (strain Agy99), this protein is ATP synthase subunit a.